A 218-amino-acid chain; its full sequence is Radial spoke head 1 homolog (218 aa).

Residues 1-13 (MSDAGTEEFDEEQ) show a composition bias toward acidic residues. Positions 1–48 (MSDAGTEEFDEEQGSLGEYEGDRNEAGERHGQGKAVLPRGDTYQGAYE) are disordered. MORN repeat units lie at residues 19 to 42 (YEGD…RGDT), 43 to 65 (YQGA…NGAR), 66 to 88 (YTGE…DGSK), 89 to 111 (YEGS…NGDT), 112 to 134 (YDGE…ETGS), and 158 to 180 (YHGN…IGCE). Basic and acidic residues predominate over residues 20-31 (EGDRNEAGERHG).

As to quaternary structure, component of the axonemal radial spoke complexes. Interacts with septin SEPT7. Testis-specific.

Its subcellular location is the cytoplasm. The protein resides in the cytoskeleton. It localises to the cilium axoneme. It is found in the flagellum basal body. The protein localises to the flagellum axoneme. Functionally, functions as part of axonemal radial spoke complexes that play an important part in the motility of sperm and cilia. The protein is Radial spoke head 1 homolog (rsph1) of Cyprinus carpio (Common carp).